The sequence spans 350 residues: Iron-regulated surface determinant protein A (350 aa).

The signal sequence occupies residues 1 to 46 (MTKHYLNSKYQSEQRSSAMKKITMGTASIILGSLVYIGADSQQVNA). Residues 62–184 (SQATSQPINF…EFEKAIPTLA (123 aa)) form the NEAT domain. Residues lysine 75, serine 82, and tyrosine 166 each coordinate heme. Residues 188 to 314 (KPNNVKPVQP…KQASKAKELP (127 aa)) are disordered. The span at 203–214 (KTPTEQTKPVQP) shows a compositional bias: low complexity. Polar residues-rich tracts occupy residues 252 to 268 (AHTV…NKVQ) and 278 to 296 (KSES…QTNK). Positions 299 to 314 (KHNETPKQASKAKELP) are enriched in basic and acidic residues. The LPXTG sorting signal motif lies at 313–317 (LPKTG). Threonine 316 carries the post-translational modification Pentaglycyl murein peptidoglycan amidated threonine. A propeptide spans 317–350 (GLTSVDNFISTVAFATLALLGSLSLLLFKRKESK) (removed by sortase A).

It belongs to the IsdA family. As to quaternary structure, monomer. Interacts with IsdC. Interacts with IsdB.

The protein resides in the secreted. Its subcellular location is the cell wall. Functionally, cell wall-anchored surface receptor that participates in the extraction of heme from oxidized methemoglobin/metHb to enable growth on hemoglobin as a sole iron source. Receives heme from IsdB and transfers it to IsdC. Also plays a role in the inhibition of host immune response. Protects S.aureus against the bactericidal protease activity of apolactoferrin. Decreases bacterial cellular hydrophobicity, which renders S.aureus resistant to bactericidal human skin fatty acids as well as to beta-defensins and cathelicidin. Also binds fibronectin and chains B-beta and gamma of fibrinogen, promoting clumping of S.aureus with fibrinogen. Involved in adherence of S.aureus to human desquamated nasal epithelial cells and is required for nasal colonization. The chain is Iron-regulated surface determinant protein A (isdA) from Staphylococcus aureus (strain Mu3 / ATCC 700698).